A 393-amino-acid chain; its full sequence is Riboflavin biosynthesis protein RibBA (393 aa).

Residues 1-200 (MQFDNIDSAL…IDDLIEYRKK (200 aa)) are DHBP synthase. Residues 27 to 28 (RE), aspartate 32, 139 to 143 (RNGHT), and glutamate 163 each bind D-ribulose 5-phosphate. Position 28 (glutamate 28) interacts with Mg(2+). Histidine 142 contributes to the Mg(2+) binding site. The tract at residues 201–393 (LEPEIEFKAK…TKKIKMGHLI (193 aa)) is GTP cyclohydrolase II. 249-253 (RLHSA) is a GTP binding site. Residues cysteine 254, cysteine 265, and cysteine 267 each contribute to the Zn(2+) site. GTP contacts are provided by residues glutamine 270, 291 to 293 (EGR), and threonine 313. Aspartate 325 (proton acceptor; for GTP cyclohydrolase activity) is an active-site residue. Arginine 327 (nucleophile; for GTP cyclohydrolase activity) is an active-site residue. GTP-binding residues include serine 348 and lysine 353.

This sequence in the N-terminal section; belongs to the DHBP synthase family. The protein in the C-terminal section; belongs to the GTP cyclohydrolase II family. Mg(2+) is required as a cofactor. The cofactor is Mn(2+). It depends on Zn(2+) as a cofactor.

It catalyses the reaction D-ribulose 5-phosphate = (2S)-2-hydroxy-3-oxobutyl phosphate + formate + H(+). The enzyme catalyses GTP + 4 H2O = 2,5-diamino-6-hydroxy-4-(5-phosphoribosylamino)-pyrimidine + formate + 2 phosphate + 3 H(+). The protein operates within cofactor biosynthesis; riboflavin biosynthesis; 2-hydroxy-3-oxobutyl phosphate from D-ribulose 5-phosphate: step 1/1. Its pathway is cofactor biosynthesis; riboflavin biosynthesis; 5-amino-6-(D-ribitylamino)uracil from GTP: step 1/4. In terms of biological role, catalyzes the conversion of D-ribulose 5-phosphate to formate and 3,4-dihydroxy-2-butanone 4-phosphate. Catalyzes the conversion of GTP to 2,5-diamino-6-ribosylamino-4(3H)-pyrimidinone 5'-phosphate (DARP), formate and pyrophosphate. The sequence is that of Riboflavin biosynthesis protein RibBA from Staphylococcus aureus (strain COL).